The primary structure comprises 837 residues: MTEKEQNAENAPKKLSLKRREKTTVSATTAGGKAKAVQVEVRKSRKIDTEAAIKAAEAAKLKAQEEAEAKAKAEAEKAEQEKATAAKVREKAAKPTKAEAKPENSTVAKAADPEKEKRKAEEAELRRKADELARQKAEEQARKAAEDAKRYAEAAKDTVEHHNDSDDFSDYHLTSSYAREAEDEDNRRRENHIRTGKNKVTKAKKGGRDDNGSKDERSADRRNQKDMRGKGKQSKQGKRGSTLQQAFTKPAQVTKSDVVIGETITVAELANKMAIKATEIIKTMMKMGEMVTINQVLDQETAQLVAEELGHKVILRKENELEESVLEDRDVNAEKVQRAPVVTIMGHVDHGKTSLLDYIRKAKVAAGEAGGITQHIGAYHVETKGKIITFLDTPGHAAFTSMRARGAKATDIVVLVVAADDGVMPQTIEAIQHARAAGVPIVVAVNKIDKPEANPERVEQELLQYDVVAEKFGGDVQFVYVSAKKGSGVDDLLDAILLQSEVLELTAVKDGMASGVVIESYLDKGRGPVATILVQSGTLKRGDIVLCGFEFGRVRAMRDEDGKDINEAGPSIPVEVLGLSGVPAAGDEATVVRDEKKAREVALYRQGKFREVKLARQQKAKLENMFSNMSEGDVAELNVIVKADVQGSVEAIVQSLQELSTEEVKVKVVGSGVGGITETDATLAAASNAIMVGFNVRADASARRVIENENIDLRYYSIIYELLNEIKAAMSGMLQPEFKQEIIGLAEVRDIFRHPKFGAIAGCMVTEGIVKRNNPIRVLRDNVVIFEGELESLRRFKDDVNEVRNGMECGIGVKNYNDVKVGDQIEVFEVVEVKRSI.

Disordered regions lie at residues 1–44 and 62–251; these read MTEK…VRKS and KAQE…TKPA. Basic and acidic residues-rich tracts occupy residues 62–102 and 111–165; these read KAQE…EAKP and ADPE…HNDS. The span at 189–205 shows a compositional bias: basic residues; the sequence is RENHIRTGKNKVTKAKK. Positions 206–229 are enriched in basic and acidic residues; sequence GGRDDNGSKDERSADRRNQKDMRG. Residues 242 to 251 are compositionally biased toward polar residues; it reads TLQQAFTKPA. The region spanning 337-506 is the tr-type G domain; the sequence is QRAPVVTIMG…LLQSEVLELT (170 aa). Residues 346-353 are G1; the sequence is GHVDHGKT. 346–353 is a GTP binding site; the sequence is GHVDHGKT. The segment at 371 to 375 is G2; that stretch reads GITQH. The interval 392–395 is G3; it reads DTPG. GTP-binding positions include 392-396 and 446-449; these read DTPGH and NKID. Residues 446 to 449 form a G4 region; sequence NKID. The G5 stretch occupies residues 482–484; the sequence is SAK.

The protein belongs to the TRAFAC class translation factor GTPase superfamily. Classic translation factor GTPase family. IF-2 subfamily.

The protein resides in the cytoplasm. One of the essential components for the initiation of protein synthesis. Protects formylmethionyl-tRNA from spontaneous hydrolysis and promotes its binding to the 30S ribosomal subunits. Also involved in the hydrolysis of GTP during the formation of the 70S ribosomal complex. This is Translation initiation factor IF-2 from Actinobacillus succinogenes (strain ATCC 55618 / DSM 22257 / CCUG 43843 / 130Z).